A 560-amino-acid chain; its full sequence is Poly(3-hydroxyalkanoate) polymerase 2 (560 aa).

Cysteine 296 is a catalytic residue.

This sequence belongs to the PHA/PHB synthase family. Type II PhaC subfamily.

It participates in biopolymer metabolism; poly-(R)-3-hydroxybutanoate biosynthesis. Its function is as follows. Synthesizes poly(3-hydroxyalkanoates) (PHA), complements a mutant of P.putida that does not make PHA. The chain is Poly(3-hydroxyalkanoate) polymerase 2 from Ectopseudomonas oleovorans (Pseudomonas oleovorans).